The sequence spans 702 residues: K(+)-insensitive pyrophosphate-energized proton pump (702 aa).

4 helical membrane passes run 3–23 (GIYL…ALTI), 63–83 (AVVF…GFLI), 130–150 (MLVA…LVGI), and 162–182 (VALG…GGIF). Lysine 184 is a substrate binding site. Residues aspartate 187, aspartate 191, asparagine 214, and aspartate 217 each coordinate Mg(2+). The next 6 membrane-spanning stretches (helical) occupy residues 234 to 254 (AVTV…VPAM), 255 to 275 (TSMM…SILG), 294 to 314 (GFLV…AIVP), 329 to 349 (GFDL…LIWV), 379 to 399 (GLAI…AAII), and 407 to 427 (LFGI…VVAL). Residue aspartate 435 coordinates Mg(2+). Helical transmembrane passes span 466-486 (AVTK…LFAA), 517-537 (YVVV…SMGM), 586-606 (IIPS…ILGI), and 612-632 (AFSA…FVAI). Residues aspartate 642, aspartate 668, and aspartate 672 each coordinate Ca(2+). Lysine 675 provides a ligand contact to substrate.

It belongs to the H(+)-translocating pyrophosphatase (TC 3.A.10) family. K(+)-insensitive subfamily. Homodimer. Requires Mg(2+) as cofactor.

The protein resides in the cell inner membrane. It carries out the reaction diphosphate + H2O + H(+)(in) = 2 phosphate + 2 H(+)(out). Its function is as follows. Proton pump that utilizes the energy of pyrophosphate hydrolysis as the driving force for proton movement across the membrane. Generates a proton motive force. The sequence is that of K(+)-insensitive pyrophosphate-energized proton pump from Rhodospirillum rubrum (strain ATCC 11170 / ATH 1.1.1 / DSM 467 / LMG 4362 / NCIMB 8255 / S1).